We begin with the raw amino-acid sequence, 65 residues long: Large ribosomal subunit protein bL35 (65 aa).

The interval 1–21 (MPKMKTKSGAAKRFTVRAGGT) is disordered.

The protein belongs to the bacterial ribosomal protein bL35 family.

The protein is Large ribosomal subunit protein bL35 of Nitrosospira multiformis (strain ATCC 25196 / NCIMB 11849 / C 71).